Reading from the N-terminus, the 406-residue chain is Tryptophan synthase beta chain (406 aa).

At lysine 97 the chain carries N6-(pyridoxal phosphate)lysine.

The protein belongs to the TrpB family. Tetramer of two alpha and two beta chains. Pyridoxal 5'-phosphate is required as a cofactor.

It carries out the reaction (1S,2R)-1-C-(indol-3-yl)glycerol 3-phosphate + L-serine = D-glyceraldehyde 3-phosphate + L-tryptophan + H2O. It functions in the pathway amino-acid biosynthesis; L-tryptophan biosynthesis; L-tryptophan from chorismate: step 5/5. In terms of biological role, the beta subunit is responsible for the synthesis of L-tryptophan from indole and L-serine. The chain is Tryptophan synthase beta chain from Lacticaseibacillus paracasei (strain ATCC 334 / BCRC 17002 / CCUG 31169 / CIP 107868 / KCTC 3260 / NRRL B-441) (Lactobacillus paracasei).